The sequence spans 496 residues: L-arabinose isomerase (496 aa).

Glu-306, Glu-331, His-348, and His-447 together coordinate Mn(2+).

This sequence belongs to the arabinose isomerase family. Mn(2+) serves as cofactor.

It catalyses the reaction beta-L-arabinopyranose = L-ribulose. It participates in carbohydrate degradation; L-arabinose degradation via L-ribulose; D-xylulose 5-phosphate from L-arabinose (bacterial route): step 1/3. Its function is as follows. Catalyzes the conversion of L-arabinose to L-ribulose. This Geobacillus thermodenitrificans (strain NG80-2) protein is L-arabinose isomerase.